A 121-amino-acid chain; its full sequence is Protein yippee-like At3g55890 (121 aa).

The region spanning 12-109 is the Yippee domain; sequence NIYICKLCKT…LELYKISGPH (98 aa). Residues Cys16, Cys19, Cys72, and Cys75 each contribute to the Zn(2+) site.

Belongs to the yippee family.

This chain is Protein yippee-like At3g55890, found in Arabidopsis thaliana (Mouse-ear cress).